The chain runs to 1069 residues: Enteropeptidase (1069 aa).

Residues 1–18 (MKSSRDEAVGHHSISSFE) lie on the Cytoplasmic side of the membrane. A helical; Signal-anchor for type II membrane protein transmembrane segment spans residues 19–47 (VMLSALFIMLMVFSIGLIAVSWLAVKESE). The Extracellular portion of the chain corresponds to 48-1069 (GDAALGKSHE…FIEWIHSFLH (1022 aa)). An SEA domain is found at 54-169 (KSHEVRGTFK…NSIDITASLS (116 aa)). Asparagine 147, asparagine 197, and asparagine 212 each carry an N-linked (GlcNAc...) asparagine glycan. Residues 227–268 (IECQPGSRPCAHAWNCVATDLFCDGEVNCPDGSDEDTGLCAT) enclose the LDL-receptor class A 1 domain. 4 disulfide bridges follow: cysteine 229–cysteine 242, cysteine 236–cysteine 255, cysteine 249–cysteine 266, and cysteine 270–cysteine 298. Residues 270–379 (CDGRFLLTGD…IGFNATYSTF (110 aa)) enclose the CUB 1 domain. N-linked (GlcNAc...) asparagine glycosylation is found at asparagine 373, asparagine 380, asparagine 433, asparagine 515, asparagine 579, and asparagine 675. The 163-residue stretch at 387 to 549 (YEKIDCTFDD…ISLTNGICSQ (163 aa)) folds into the MAM domain. The cysteines at positions 569 and 597 are disulfide-linked. The CUB 2 domain maps to 569–679 (CGGPFELWEP…KGFKANFTSG (111 aa)). The region spanning 686–724 (EPCQDDEFQCKDGNCIPLGNLCDSYPHCRDGSDEASCVR) is the LDL-receptor class A 2 domain. 3 cysteine pairs are disulfide-bonded: cysteine 688–cysteine 700, cysteine 695–cysteine 713, and cysteine 707–cysteine 722. One can recognise an SRCR domain in the interval 723-816 (VRFLNGTRSN…LILLQCNHKS (94 aa)). N-linked (GlcNAc...) asparagine glycosylation is found at asparagine 727, asparagine 751, asparagine 770, and asparagine 791. Cystine bridges form between cysteine 802/cysteine 812, cysteine 817/cysteine 945, cysteine 859/cysteine 875, cysteine 959/cysteine 1027, cysteine 991/cysteine 1006, and cysteine 1017/cysteine 1045. A Peptidase S1 domain is found at 830-1069 (IVGGSDAQAG…FIEWIHSFLH (240 aa)). The Charge relay system role is filled by histidine 874. N-linked (GlcNAc...) asparagine glycosylation occurs at asparagine 897. Aspartate 925 acts as the Charge relay system in catalysis. Asparagine 936 and asparagine 999 each carry an N-linked (GlcNAc...) asparagine glycan. Serine 1021 (charge relay system) is an active-site residue.

It belongs to the peptidase S1 family. In terms of assembly, heterodimer of a catalytic (light) chain and a multidomain (heavy) chain linked by a disulfide bond. Post-translationally, the chains are derived from a single precursor that is cleaved by a trypsin-like protease.

The protein localises to the membrane. It catalyses the reaction Activation of trypsinogen by selective cleavage of 6-Lys-|-Ile-7 bond.. Its function is as follows. Responsible for initiating activation of pancreatic proteolytic proenzymes (trypsin, chymotrypsin and carboxypeptidase A). It catalyzes the conversion of trypsinogen to trypsin which in turn activates other proenzymes including chymotrypsinogen, procarboxypeptidases, and proelastases. The protein is Enteropeptidase (Tmprss15) of Mus musculus (Mouse).